A 98-amino-acid chain; its full sequence is Defensin-like protein 219 (98 aa).

Residues 1-16 form the signal peptide; sequence MKTIFVFLTLAVLVSS. 3 disulfides stabilise this stretch: Cys68-Cys85, Cys71-Cys90, and Cys75-Cys92.

Belongs to the DEFL family.

It is found in the secreted. The polypeptide is Defensin-like protein 219 (Arabidopsis thaliana (Mouse-ear cress)).